Here is an 84-residue protein sequence, read N- to C-terminus: Small ribosomal subunit protein uS17 (84 aa).

Belongs to the universal ribosomal protein uS17 family. As to quaternary structure, part of the 30S ribosomal subunit.

One of the primary rRNA binding proteins, it binds specifically to the 5'-end of 16S ribosomal RNA. This is Small ribosomal subunit protein uS17 from Photobacterium profundum (strain SS9).